A 450-amino-acid chain; its full sequence is MSLRLSSASRRSCPRPTTGSLRLSGGGTSFGTGNSCGISGIGSGFSCAFGGSSLGGNTAGGNPCAGFTVNERGLLSGNEKVTMQNLNDRLASYLDSVHALEEANADLEQKIKGWYEKFGPGSCRGLDHDYSRYFPIIDDLKNQIIASTTSNANAVLQIDNARLTADDFRLKYENELALHQSVEADVNGLRRVLDEITLCRTDLEIQYETLSEEMTYLKKNHKEEMQVLQCAAGGNVNVEMNAAPGVDLTVLLNNMRAEYEALAEQNRRDAEAWFNEKSASLQQQISEDVGATTSARNELTEMKRTLQTLEIELQSLLATKHSLECSLTETESNYCAQLAQIQAQIGALEEQLHQVRTETEGQKLEYEQLLDIKLHLEKEIETYCLLIGGDDGACKSGGYKSKDYGSGNVGSQVKDSAKAIVVKKVLEEVDQRSKILTTRLRSLEEKSQSN.

Low complexity predominate over residues 1–23 (MSLRLSSASRRSCPRPTTGSLRL). The segment at 1 to 26 (MSLRLSSASRRSCPRPTTGSLRLSGG) is disordered. The tract at residues 1–78 (MSLRLSSASR…VNERGLLSGN (78 aa)) is head. A coil 1A region spans residues 79 to 114 (EKVTMQNLNDRLASYLDSVHALEEANADLEQKIKGW). An IF rod domain is found at 79–394 (EKVTMQNLND…LLIGGDDGAC (316 aa)). Residues 115 to 136 (YEKFGPGSCRGLDHDYSRYFPI) are linker 1. A coil 1B region spans residues 137–228 (IDDLKNQIIA…KNHKEEMQVL (92 aa)). The interval 229-251 (QCAAGGNVNVEMNAAPGVDLTVL) is linker 12. The interval 252-390 (LNNMRAEYEA…ETYCLLIGGD (139 aa)) is coil 2. The tail stretch occupies residues 391–450 (DGACKSGGYKSKDYGSGNVGSQVKDSAKAIVVKKVLEEVDQRSKILTTRLRSLEEKSQSN). Residue Ser442 is modified to Phosphoserine.

It belongs to the intermediate filament family. In terms of assembly, heterodimer of a type I and a type II keratin. Heterodimer with type II keratin KRT5 leading to the formation of keratin intermediate filament (KIF) network. Interacts with KRT6A to form filaments.

The protein resides in the cytoplasm. In terms of biological role, essential for the proper assembly of type I and type II keratin protein complexes and formation of keratin intermediate filaments in the inner root sheath (irs). Plays a role in the cytoskeleton organization. In Pan troglodytes (Chimpanzee), this protein is Keratin, type I cytoskeletal 25 (KRT25).